Here is a 350-residue protein sequence, read N- to C-terminus: THUMP domain-containing protein 1 (350 aa).

A compositionally biased stretch (polar residues) spans 1-10; that stretch reads MATTAQQSPQ. Disordered stretches follow at residues 1 to 42 and 75 to 96; these read MATT…LEPG and PEKF…DDAE. Position 2 is an N-acetylalanine (A2). A phosphoserine mark is found at S8, S86, S88, and S119. The region spanning 147 to 254 is the THUMP domain; that stretch reads DMYKTKKKKT…KAVCCLSVVK (108 aa). Position 270 is a phosphoserine (S270). The span at 270–292 shows a compositional bias: basic and acidic residues; sequence SAKDSQPHPKLGNGKEAKLEPDS. The interval 270-350 is disordered; it reads SAKDSQPHPK…VPKTNENELS (81 aa).

The protein belongs to the THUMPD1 family. As to quaternary structure, interacts with NAT10. Binds tRNA.

Its function is as follows. Functions as a tRNA-binding adapter to mediate NAT10-dependent tRNA acetylation modifying cytidine to N4-acetylcytidine (ac4C). The chain is THUMP domain-containing protein 1 (Thumpd1) from Mus musculus (Mouse).